The sequence spans 328 residues: Ketol-acid reductoisomerase (NADP(+)) (328 aa).

Residues A2–T181 enclose the KARI N-terminal Rossmann domain. Residues Y25–Q28, R48, S52, and D82–Q85 each bind NADP(+). The active site involves H107. G133 contributes to the NADP(+) binding site. One can recognise a KARI C-terminal knotted domain in the interval T182–G327. 4 residues coordinate Mg(2+): D190, E194, E226, and E230. S251 lines the substrate pocket.

This sequence belongs to the ketol-acid reductoisomerase family. Mg(2+) is required as a cofactor.

It carries out the reaction (2R)-2,3-dihydroxy-3-methylbutanoate + NADP(+) = (2S)-2-acetolactate + NADPH + H(+). The catalysed reaction is (2R,3R)-2,3-dihydroxy-3-methylpentanoate + NADP(+) = (S)-2-ethyl-2-hydroxy-3-oxobutanoate + NADPH + H(+). Its pathway is amino-acid biosynthesis; L-isoleucine biosynthesis; L-isoleucine from 2-oxobutanoate: step 2/4. The protein operates within amino-acid biosynthesis; L-valine biosynthesis; L-valine from pyruvate: step 2/4. Involved in the biosynthesis of branched-chain amino acids (BCAA). Catalyzes an alkyl-migration followed by a ketol-acid reduction of (S)-2-acetolactate (S2AL) to yield (R)-2,3-dihydroxy-isovalerate. In the isomerase reaction, S2AL is rearranged via a Mg-dependent methyl migration to produce 3-hydroxy-3-methyl-2-ketobutyrate (HMKB). In the reductase reaction, this 2-ketoacid undergoes a metal-dependent reduction by NADPH to yield (R)-2,3-dihydroxy-isovalerate. The polypeptide is Ketol-acid reductoisomerase (NADP(+)) (Caldivirga maquilingensis (strain ATCC 700844 / DSM 13496 / JCM 10307 / IC-167)).